The following is a 349-amino-acid chain: Histidinol-phosphate aminotransferase (349 aa).

Lys206 carries the post-translational modification N6-(pyridoxal phosphate)lysine.

Belongs to the class-II pyridoxal-phosphate-dependent aminotransferase family. Histidinol-phosphate aminotransferase subfamily. As to quaternary structure, homodimer. Pyridoxal 5'-phosphate is required as a cofactor.

The catalysed reaction is L-histidinol phosphate + 2-oxoglutarate = 3-(imidazol-4-yl)-2-oxopropyl phosphate + L-glutamate. Its pathway is amino-acid biosynthesis; L-histidine biosynthesis; L-histidine from 5-phospho-alpha-D-ribose 1-diphosphate: step 7/9. This chain is Histidinol-phosphate aminotransferase, found in Streptococcus mutans serotype c (strain ATCC 700610 / UA159).